Here is a 445-residue protein sequence, read N- to C-terminus: MGKEKVHISLVVIGHVDSGKSTTTGHLIYKCGGIDKRTIEKFEKEASEMGKGSFKYAWVLDKLKAERERCITIDIALWKFETAKSVFTIIDAPGHRDFIKNMITGTSQADAAVLVIDSTTGGFEAGISKDGQTREHALLAYTLGVKQMIVATNKFDDKTVKYSQARYEEIKKEVSGYLKKVGYNPEKVPFIPISGWNGDNMIEASENMGWYKGLTLIGALDNLEPPKRPSDKPLRLPLQDVYKIGGIGTVPVGRVETGVLKPGDVVTFAPNNLTTEVKSVEMHHEALTEAVPGDNVGFNVKNVSVKDIRRGYVASNAKNDPAKEAADFTAQVIILNHPGQIGNGYAPVLDCHTCHIACKFATIQTKIDRRSGKELEAEPKFIKSGDAAIVLMKPQKPMCVESFTDYPPLGVSCGDMRQTVAVGVIKSVNKKENTGKVTKAAQKKK.

Residues 5–230 enclose the tr-type G domain; sequence KVHISLVVIG…DNLEPPKRPS (226 aa). Positions 14-21 are G1; it reads GHVDSGKS. Residue 14 to 21 coordinates GTP; it reads GHVDSGKS. N6,N6-dimethyllysine is present on Lys-55. The tract at residues 70–74 is G2; that stretch reads CITID. Lys-79 bears the N6,N6,N6-trimethyllysine mark. Positions 91 to 94 are G3; sequence DAPG. GTP contacts are provided by residues 91–95 and 153–156; these read DAPGH and NKFD. Positions 153-156 are G4; sequence NKFD. Residue Lys-187 is modified to N6,N6,N6-trimethyllysine. The interval 194 to 196 is G5; that stretch reads SGW. The residue at position 261 (Lys-261) is an N6-methyllysine. N6,N6,N6-trimethyllysine is present on residues Lys-306 and Lys-396.

Belongs to the TRAFAC class translation factor GTPase superfamily. Classic translation factor GTPase family. EF-Tu/EF-1A subfamily.

It localises to the cytoplasm. Functionally, this protein promotes the GTP-dependent binding of aminoacyl-tRNA to the A-site of ribosomes during protein biosynthesis. This is Elongation factor 1-alpha (TEF) from Euglena gracilis.